A 119-amino-acid polypeptide reads, in one-letter code: Large ribosomal subunit protein uL18 (119 aa).

The protein belongs to the universal ribosomal protein uL18 family. In terms of assembly, part of the 50S ribosomal subunit; part of the 5S rRNA/L5/L18/L25 subcomplex. Contacts the 5S and 23S rRNAs.

This is one of the proteins that bind and probably mediate the attachment of the 5S RNA into the large ribosomal subunit, where it forms part of the central protuberance. The chain is Large ribosomal subunit protein uL18 from Borreliella afzelii (strain PKo) (Borrelia afzelii).